The chain runs to 202 residues: Helix-loop-helix protein 10 (202 aa).

Disordered stretches follow at residues 1-26 and 83-112; these read MESSSMTTHQEEPLDLSTGNHGNSEL and QNKSEVNDENESTPSPTQNSRRRTSTGKID. Residues 17 to 26 show a composition bias toward polar residues; it reads STGNHGNSEL. The tract at residues 121-134 is basic motif; sequence TRRYEANARERNRV. The bHLH domain occupies 121–172; it reads TRRYEANARERNRVQQLSKMFDQLRVCLPIEDDAKISKLATLKVASSYIGYL. Residues 135–172 are helix-loop-helix motif; that stretch reads QQLSKMFDQLRVCLPIEDDAKISKLATLKVASSYIGYL.

In terms of assembly, heterodimer with hlh-2. In terms of tissue distribution, expressed in intestine, neurons in head, body and tail, and in body hypodermis, and vulva. Expressed in neurons in the male-specific genital sensilla (simple sense organs) known as rays.

It is found in the nucleus. It localises to the cytoplasm. Its function is as follows. Probable transcription factor which binds the E box motif 5'-CA[TC][AG]TG-3'. In Caenorhabditis elegans, this protein is Helix-loop-helix protein 10.